A 279-amino-acid chain; its full sequence is Large ribosomal subunit protein uL2 (279 aa).

A disordered region spans residues 224–279 (AMNPIDHPHGGGEGRTSGGRHPVTPWGKGTKGNRTRKSKASDKLIVRSRHAKKKGR). Basic residues predominate over residues 269 to 279 (VRSRHAKKKGR).

The protein belongs to the universal ribosomal protein uL2 family. As to quaternary structure, part of the 50S ribosomal subunit. Forms a bridge to the 30S subunit in the 70S ribosome.

In terms of biological role, one of the primary rRNA binding proteins. Required for association of the 30S and 50S subunits to form the 70S ribosome, for tRNA binding and peptide bond formation. It has been suggested to have peptidyltransferase activity; this is somewhat controversial. Makes several contacts with the 16S rRNA in the 70S ribosome. The polypeptide is Large ribosomal subunit protein uL2 (Cereibacter sphaeroides (strain ATCC 17029 / ATH 2.4.9) (Rhodobacter sphaeroides)).